We begin with the raw amino-acid sequence, 447 residues long: Nuclear envelope integral membrane protein 2 (447 aa).

An N-terminal signal peptide occupies residues Met-1–Ala-28. A run of 5 helical transmembrane segments spans residues Glu-144–Ala-164, Phe-173–Ala-193, Ser-202–Phe-222, Ile-235–His-255, and Ala-275–Val-295. Residues Thr-410–Ile-438 form a disordered region.

This sequence belongs to the NEMP family.

It localises to the nucleus inner membrane. The chain is Nuclear envelope integral membrane protein 2 (NEMP2) from Gallus gallus (Chicken).